A 170-amino-acid polypeptide reads, in one-letter code: Phosphopantetheine adenylyltransferase (170 aa).

Threonine 17 is a binding site for substrate. ATP is bound by residues 17 to 18 (TF) and histidine 25. 3 residues coordinate substrate: lysine 49, leucine 81, and arginine 95. Residues 96-98 (GLR), glutamate 106, and 131-137 (LMYISST) each bind ATP.

It belongs to the bacterial CoaD family. As to quaternary structure, homohexamer. Mg(2+) is required as a cofactor.

It is found in the cytoplasm. It catalyses the reaction (R)-4'-phosphopantetheine + ATP + H(+) = 3'-dephospho-CoA + diphosphate. It functions in the pathway cofactor biosynthesis; coenzyme A biosynthesis; CoA from (R)-pantothenate: step 4/5. In terms of biological role, reversibly transfers an adenylyl group from ATP to 4'-phosphopantetheine, yielding dephospho-CoA (dPCoA) and pyrophosphate. This is Phosphopantetheine adenylyltransferase from Legionella pneumophila subsp. pneumophila (strain Philadelphia 1 / ATCC 33152 / DSM 7513).